Consider the following 282-residue polypeptide: Bifunctional protein FolD (282 aa).

Residues 165 to 167, T192, and V233 contribute to the NADP(+) site; that span reads GRG.

It belongs to the tetrahydrofolate dehydrogenase/cyclohydrolase family. In terms of assembly, homodimer.

It carries out the reaction (6R)-5,10-methylene-5,6,7,8-tetrahydrofolate + NADP(+) = (6R)-5,10-methenyltetrahydrofolate + NADPH. The enzyme catalyses (6R)-5,10-methenyltetrahydrofolate + H2O = (6R)-10-formyltetrahydrofolate + H(+). It functions in the pathway one-carbon metabolism; tetrahydrofolate interconversion. Its function is as follows. Catalyzes the oxidation of 5,10-methylenetetrahydrofolate to 5,10-methenyltetrahydrofolate and then the hydrolysis of 5,10-methenyltetrahydrofolate to 10-formyltetrahydrofolate. The chain is Bifunctional protein FolD from Mycobacterium leprae (strain Br4923).